A 762-amino-acid polypeptide reads, in one-letter code: 5-methyltetrahydropteroyltriglutamate--homocysteine methyltransferase (762 aa).

Residues 17 to 20 and lysine 111 each bind 5-methyltetrahydropteroyltri-L-glutamate; that span reads REWK. L-homocysteine is bound by residues 435-437 and glutamate 488; that span reads IGS. L-methionine contacts are provided by residues 435–437 and glutamate 488; that span reads IGS. 5-methyltetrahydropteroyltri-L-glutamate contacts are provided by residues 519-520 and tryptophan 565; that span reads RC. Aspartate 603 is a binding site for L-homocysteine. Aspartate 603 provides a ligand contact to L-methionine. Residue glutamate 609 coordinates 5-methyltetrahydropteroyltri-L-glutamate. Zn(2+) is bound by residues histidine 645, cysteine 647, and glutamate 669. Residue histidine 698 is the Proton donor of the active site. Cysteine 730 lines the Zn(2+) pocket.

It belongs to the vitamin-B12 independent methionine synthase family. Zn(2+) is required as a cofactor.

It carries out the reaction 5-methyltetrahydropteroyltri-L-glutamate + L-homocysteine = tetrahydropteroyltri-L-glutamate + L-methionine. Its pathway is amino-acid biosynthesis; L-methionine biosynthesis via de novo pathway; L-methionine from L-homocysteine (MetE route): step 1/1. Catalyzes the transfer of a methyl group from 5-methyltetrahydrofolate to homocysteine resulting in methionine formation. The chain is 5-methyltetrahydropteroyltriglutamate--homocysteine methyltransferase from Bacillus anthracis (strain CDC 684 / NRRL 3495).